A 1562-amino-acid polypeptide reads, in one-letter code: Phospholipid-transporting ATPase dnf1 (1562 aa).

Disordered regions lie at residues 1–38 (MKSS…ADDG), 55–94 (LPLG…SDSR), 115–134 (TPST…KKAH), and 146–166 (PLDD…NGRP). At 1-275 (MKSSGIAGDS…IAIMQMIPGW (275 aa)) the chain is on the extracellular side. Residues 12 to 21 (GFETNFLNET) show a composition bias toward polar residues. Over residues 60 to 69 (DENELDEIDI) the composition is skewed to acidic residues. Over residues 71–86 (GDSKKLDSVEVDESHD) the composition is skewed to basic and acidic residues. The chain crosses the membrane as a helical span at residues 276–296 (STTGTYTTIIPLLIFISIAIL). The Cytoplasmic segment spans residues 297-574 (REGFDNYRRY…APSMQKVTNR (278 aa)). The disordered stretch occupies residues 347–406 (SQESASRSTIRSTDEREPERTSEDPPQLPPSPSSPSSPALSVKPNIDPQPPLYNSTLTTT). Basic and acidic residues predominate over residues 358-369 (STDEREPERTSE). Over residues 372–381 (PQLPPSPSSP) the composition is skewed to pro residues. The helical transmembrane segment at 575-595 (IVIFIFALVVSMAIYCTAAYF) threads the bilayer. Over 596–614 (VWQKKVERKLWYLTNSKLS) the chain is Extracellular. Residues 615–635 (FVPILVSFIILYNTMVPISLY) traverse the membrane as a helical segment. Topologically, residues 636 to 1309 (VSMEIIRVFQ…YILGTFYKEQ (674 aa)) are cytoplasmic. Asp684 acts as the 4-aspartylphosphate intermediate in catalysis. Positions 684, 685, 686, 794, 843, 845, 848, and 866 each coordinate ATP. Residue Asp684 coordinates Mg(2+). Thr686 is a binding site for Mg(2+). The residue at position 954 (Ser954) is a Phosphoserine. ATP contacts are provided by residues Arg1022, Thr1023, Thr1102, Gly1103, Asp1104, 1181–1188 (VIVIDGST), Arg1216, and Lys1222. Asp1243 contacts Mg(2+). Asn1246 and Asp1247 together coordinate ATP. Residues 1310–1330 (FFFLMQAIMQPFVGYTGQSLY) form a helical membrane-spanning segment. The Extracellular portion of the chain corresponds to 1331–1332 (ES). A helical membrane pass occupies residues 1333-1353 (WGLTCFNTLFSSLCVIGLGIF). At 1354–1381 (EKDLSASTVIAVPELYQKGINNEAFNWR) the chain is on the cytoplasmic side. The chain crosses the membrane as a helical span at residues 1382–1402 (VYFGWCSIAFIQAFLVFYVTY). Residues 1403 to 1414 (SLFGMKELNDNN) are Extracellular-facing. Residues 1415–1435 (IFAYGQLIFTAAIFIMNFKLV) traverse the membrane as a helical segment. Topologically, residues 1436-1443 (FIEMQYIN) are cytoplasmic. A helical transmembrane segment spans residues 1444 to 1464 (IISIIVLVLTSLAWFLFNIFI). Topologically, residues 1465-1490 (SEHYPDKNLYLARSQFLHHFGKNPSW) are extracellular. A helical membrane pass occupies residues 1491-1511 (WLTMLFVMVCALTIDIVAQML). Topologically, residues 1512–1562 (RRTLRPTDTDIFVEMENDAFVRSRFEQESGEFLQANAPSVDEIEQYLKSRD) are cytoplasmic.

It belongs to the cation transport ATPase (P-type) (TC 3.A.3) family. Type IV subfamily. Mg(2+) serves as cofactor.

It is found in the golgi apparatus. The protein localises to the trans-Golgi network membrane. Its subcellular location is the endosome membrane. It carries out the reaction ATP + H2O + phospholipidSide 1 = ADP + phosphate + phospholipidSide 2.. It catalyses the reaction a 1,2-diacyl-sn-glycero-3-phosphocholine(out) + ATP + H2O = a 1,2-diacyl-sn-glycero-3-phosphocholine(in) + ADP + phosphate + H(+). The catalysed reaction is a 1,2-diacyl-sn-glycero-3-phosphoethanolamine(out) + ATP + H2O = a 1,2-diacyl-sn-glycero-3-phosphoethanolamine(in) + ADP + phosphate + H(+). Its function is as follows. Catalytic component of a P4-ATPase flippase complex which catalyzes the hydrolysis of ATP coupled to the transport of phosphatidylcholine and small amounts of phosphatidylethanolamine from the lumen to the cytosolic leaflet of the trans-Golgi network and ensures the maintenance of asymmetric distribution of phospholipids. May be involved in transport from early endosomes to the trans-Golgi network (TGN). The protein is Phospholipid-transporting ATPase dnf1 of Schizosaccharomyces pombe (strain 972 / ATCC 24843) (Fission yeast).